The chain runs to 92 residues: Small ribosomal subunit protein uS19 (92 aa).

It belongs to the universal ribosomal protein uS19 family.

Functionally, protein S19 forms a complex with S13 that binds strongly to the 16S ribosomal RNA. The sequence is that of Small ribosomal subunit protein uS19 from Psychromonas ingrahamii (strain DSM 17664 / CCUG 51855 / 37).